A 122-amino-acid chain; its full sequence is Double-headed protease inhibitor, submandibular gland (122 aa).

2 consecutive Kazal-like domains span residues 10–70 (GGRK…ECDI) and 71–121 (ECTQ…QCQS). 6 disulfides stabilise this stretch: C16–C50, C28–C47, C36–C68, C72–C101, C79–C98, and C87–C119.

Its subcellular location is the secreted. In terms of biological role, this inhibitor is composed of two homologous actively inhibiting halves: one which inhibits trypsin, the other which inhibits elastase. In Martes martes (European pine marten), this protein is Double-headed protease inhibitor, submandibular gland.